Consider the following 458-residue polypeptide: Argininosuccinate lyase (458 aa).

This sequence belongs to the lyase 1 family. Argininosuccinate lyase subfamily.

Its subcellular location is the cytoplasm. It carries out the reaction 2-(N(omega)-L-arginino)succinate = fumarate + L-arginine. Its pathway is amino-acid biosynthesis; L-arginine biosynthesis; L-arginine from L-ornithine and carbamoyl phosphate: step 3/3. The polypeptide is Argininosuccinate lyase (Actinobacillus pleuropneumoniae serotype 5b (strain L20)).